The primary structure comprises 252 residues: Probable phosphatase SO_1652 (252 aa).

Histidine 8, histidine 10, histidine 16, histidine 41, glutamate 74, histidine 102, histidine 132, aspartate 193, and histidine 195 together coordinate Zn(2+).

The protein belongs to the PHP family. It depends on Zn(2+) as a cofactor.

This Shewanella oneidensis (strain ATCC 700550 / JCM 31522 / CIP 106686 / LMG 19005 / NCIMB 14063 / MR-1) protein is Probable phosphatase SO_1652.